A 56-amino-acid polypeptide reads, in one-letter code: Conotoxin Cal6.41c (56 aa).

The first 23 residues, 1–23 (MSGSGAMLLGLLILVAMATSLDT), serve as a signal peptide directing secretion. 3 cysteine pairs are disulfide-bonded: C27/C41, C33/C50, and C40/C54.

In terms of tissue distribution, expressed by the venom duct.

The protein localises to the secreted. In terms of biological role, probable neurotoxin. The chain is Conotoxin Cal6.41c from Californiconus californicus (California cone).